The sequence spans 98 residues: Large ribosomal subunit protein uL23 (98 aa).

Belongs to the universal ribosomal protein uL23 family. Part of the 50S ribosomal subunit. Contacts protein L29, and trigger factor when it is bound to the ribosome.

Its function is as follows. One of the early assembly proteins it binds 23S rRNA. One of the proteins that surrounds the polypeptide exit tunnel on the outside of the ribosome. Forms the main docking site for trigger factor binding to the ribosome. This chain is Large ribosomal subunit protein uL23, found in Rickettsia akari (strain Hartford).